Consider the following 546-residue polypeptide: Arginine--tRNA ligase (546 aa).

The 'HIGH' region motif lies at Ala117–Arg127.

This sequence belongs to the class-I aminoacyl-tRNA synthetase family.

It is found in the cytoplasm. It catalyses the reaction tRNA(Arg) + L-arginine + ATP = L-arginyl-tRNA(Arg) + AMP + diphosphate. This is Arginine--tRNA ligase from Thermoplasma acidophilum (strain ATCC 25905 / DSM 1728 / JCM 9062 / NBRC 15155 / AMRC-C165).